A 165-amino-acid polypeptide reads, in one-letter code: Cytochrome c-type biogenesis protein CcmE (165 aa).

Topologically, residues M1 to R29 are cytoplasmic. Residues L30–A50 form a helical; Signal-anchor for type II membrane protein membrane-spanning segment. The Periplasmic segment spans residues F51–K165. 2 residues coordinate heme: H143 and Y147.

The protein belongs to the CcmE/CycJ family.

It localises to the cell inner membrane. In terms of biological role, heme chaperone required for the biogenesis of c-type cytochromes. Transiently binds heme delivered by CcmC and transfers the heme to apo-cytochromes in a process facilitated by CcmF and CcmH. In Brucella canis (strain ATCC 23365 / NCTC 10854 / RM-666), this protein is Cytochrome c-type biogenesis protein CcmE.